We begin with the raw amino-acid sequence, 181 residues long: Adenine phosphoribosyltransferase (181 aa).

This sequence belongs to the purine/pyrimidine phosphoribosyltransferase family. As to quaternary structure, homodimer.

The protein localises to the cytoplasm. The enzyme catalyses AMP + diphosphate = 5-phospho-alpha-D-ribose 1-diphosphate + adenine. The protein operates within purine metabolism; AMP biosynthesis via salvage pathway; AMP from adenine: step 1/1. Catalyzes a salvage reaction resulting in the formation of AMP, that is energically less costly than de novo synthesis. The chain is Adenine phosphoribosyltransferase from Pseudoalteromonas translucida (strain TAC 125).